A 513-amino-acid chain; its full sequence is Cytochrome P450 monooxygenase ARMGADRAFT_1018418 (513 aa).

The chain crosses the membrane as a helical span at residues 1 to 21; that stretch reads MTHASSAWFLAAVVIVTFIVV. Residue C435 participates in heme binding. An N-linked (GlcNAc...) asparagine glycan is attached at N442.

The protein belongs to the cytochrome P450 family. It depends on heme as a cofactor.

The protein resides in the membrane. Its pathway is secondary metabolite biosynthesis. Its function is as follows. Cytochrome P450 monooxygenase, part of the gene cluster that mediates the biosynthesis of melleolides, a range of antifungal and phytotoxic polyketide derivatives composed of an orsellinic acid (OA) moiety esterified to various sesquiterpene alcohols. The first step in melleolides biosynthesis is performed by the delta(6)-protoilludene synthase PRO1 which catalyzes the cyclization of farnesyl diphosphate to protoilludene. The orsellinic acid synthase armB produces OA by condensing acetyl-CoA with 3 malonyl-CoA units in a three-round chain elongation reaction folowed by a C2-C7 ring closure. ArmB further catalyzes the trans-esterification of OA to the various sesquiterpene alcohols resulting from the hydroxylation of protoilludene. The melleolides cluster also includes 5 cytochrome P450 monooxygenases, 4 NAD(+)-dependent oxidoreductases, one flavin-dependent oxidoreductase, and one O-methyltransferase. The cytochrome P450 monooxygenases may be involved in protoilludene hydroxylation to elaborate melleolides with multiple alcohol groups, such as melleolide D, which carries alcohol functionalities at C-4, C-5, C-10, and C-13. The role of the NAD(+)-dependent enzymes remains unknown. Numerous melleolides, including arnamial, show 5'-O-methylation of the aromatic moiety which may be catalyzed by the methyltransferase encoded in the cluster. The flavin-dependent oxidoreductase might represent the dehydrogenase yielding the aldehyde in position 1 of arnamial and other melleolides. Finally, several halogenase localized outside of the cluster, are able to catalyze the transfer of a single chlorine atom to the melleolide backbone, resulting in a 6'-chloromelleolide product. The sequence is that of Cytochrome P450 monooxygenase ARMGADRAFT_1018418 from Armillaria gallica (Bulbous honey fungus).